The chain runs to 277 residues: Large ribosomal subunit protein uL2 (277 aa).

Positions 219–277 (TVRGSVMNPNDHPHGGGEGKAPVGRKAPSTPWGKPALGLKTRNKKAKSDKLIVRRRNEK) are disordered. Residues 264–277 (AKSDKLIVRRRNEK) show a composition bias toward basic and acidic residues.

It belongs to the universal ribosomal protein uL2 family. In terms of assembly, part of the 50S ribosomal subunit. Forms a bridge to the 30S subunit in the 70S ribosome.

One of the primary rRNA binding proteins. Required for association of the 30S and 50S subunits to form the 70S ribosome, for tRNA binding and peptide bond formation. It has been suggested to have peptidyltransferase activity; this is somewhat controversial. Makes several contacts with the 16S rRNA in the 70S ribosome. In Streptococcus gordonii (strain Challis / ATCC 35105 / BCRC 15272 / CH1 / DL1 / V288), this protein is Large ribosomal subunit protein uL2.